A 757-amino-acid chain; its full sequence is Elongation factor G, mitochondrial (757 aa).

One can recognise a tr-type G domain in the interval 66–344 (DRMRNIGISA…VLDYLPCPME (279 aa)). Residues 75–82 (AHIDSGKT), 142–146 (DTPGH), and 196–199 (NKLD) contribute to the GTP site.

The protein belongs to the TRAFAC class translation factor GTPase superfamily. Classic translation factor GTPase family. EF-G/EF-2 subfamily.

It is found in the mitochondrion. Its pathway is protein biosynthesis; polypeptide chain elongation. Mitochondrial GTPase that catalyzes the GTP-dependent ribosomal translocation step during translation elongation. During this step, the ribosome changes from the pre-translocational (PRE) to the post-translocational (POST) state as the newly formed A-site-bound peptidyl-tRNA and P-site-bound deacylated tRNA move to the P and E sites, respectively. Catalyzes the coordinated movement of the two tRNA molecules, the mRNA and conformational changes in the ribosome. The chain is Elongation factor G, mitochondrial from Oryza sativa subsp. japonica (Rice).